The primary structure comprises 140 residues: Large ribosomal subunit protein uL11 (140 aa).

The protein belongs to the universal ribosomal protein uL11 family. Part of the ribosomal stalk of the 50S ribosomal subunit. Interacts with L10 and the large rRNA to form the base of the stalk. L10 forms an elongated spine to which L12 dimers bind in a sequential fashion forming a multimeric L10(L12)X complex. Post-translationally, one or more lysine residues are methylated.

Functionally, forms part of the ribosomal stalk which helps the ribosome interact with GTP-bound translation factors. The chain is Large ribosomal subunit protein uL11 from Pelobacter propionicus (strain DSM 2379 / NBRC 103807 / OttBd1).